The following is a 310-amino-acid chain: tRNA dimethylallyltransferase (310 aa).

13-20 (GPTASGKT) is a binding site for ATP. 15–20 (TASGKT) contributes to the substrate binding site. 4 interaction with substrate tRNA regions span residues 38 to 41 (DSAL), 162 to 166 (QRLSR), 243 to 248 (RCVGYR), and 276 to 283 (KRQITWLR).

This sequence belongs to the IPP transferase family. As to quaternary structure, monomer. The cofactor is Mg(2+).

It catalyses the reaction adenosine(37) in tRNA + dimethylallyl diphosphate = N(6)-dimethylallyladenosine(37) in tRNA + diphosphate. Its function is as follows. Catalyzes the transfer of a dimethylallyl group onto the adenine at position 37 in tRNAs that read codons beginning with uridine, leading to the formation of N6-(dimethylallyl)adenosine (i(6)A). This Vibrio atlanticus (strain LGP32) (Vibrio splendidus (strain Mel32)) protein is tRNA dimethylallyltransferase.